The chain runs to 247 residues: Cell division protein ZapD (247 aa).

This sequence belongs to the ZapD family. As to quaternary structure, interacts with FtsZ.

The protein localises to the cytoplasm. Cell division factor that enhances FtsZ-ring assembly. Directly interacts with FtsZ and promotes bundling of FtsZ protofilaments, with a reduction in FtsZ GTPase activity. The chain is Cell division protein ZapD from Klebsiella pneumoniae subsp. pneumoniae (strain ATCC 700721 / MGH 78578).